Consider the following 107-residue polypeptide: ATP-dependent Clp protease adapter protein ClpS (107 aa).

The tract at residues 1–20 (MAQKHEHDTSVITESAPKQK) is disordered.

It belongs to the ClpS family. In terms of assembly, binds to the N-terminal domain of the chaperone ClpA.

Involved in the modulation of the specificity of the ClpAP-mediated ATP-dependent protein degradation. This chain is ATP-dependent Clp protease adapter protein ClpS, found in Myxococcus xanthus (strain DK1622).